Here is a 729-residue protein sequence, read N- to C-terminus: Hydroxamate siderophore receptor FhuE (729 aa).

The first 36 residues, Met1–Ala36, serve as a signal peptide directing secretion. The TonB box signature appears at Glu42 to Ser49. Positions Gly48–Gln72 are disordered. The segment covering Tyr60–Gln72 has biased composition (polar residues). In terms of domain architecture, TBDR plug spans Thr74–Lys183. Fe(III)-coprogen is bound by residues Arg117, Arg142, Trp275, Tyr357, Asn373, and Trp416. The TBDR beta-barrel domain maps to Glu189–Phe729. Residues Ser712–Phe729 carry the TonB C-terminal box motif.

It belongs to the TonB-dependent receptor family.

Its subcellular location is the cell outer membrane. Involved in the active transport across the outer membrane of iron complexed with linear hydroxamate siderophores coprogen, rhodotorulic acid and ferrioxamine B. Binds Fe-coprogen with high affinity, rhodotorulic acid to a lesser extent, and weakly to ferrioxamine B. Selective for planar siderophores. Does not use cyclic siderophores ferrichrome nor ferrioxamine E as substrates. This is Hydroxamate siderophore receptor FhuE from Escherichia coli (strain K12).